The sequence spans 472 residues: ATP synthase subunit beta (472 aa).

Position 157–164 (157–164 (GGAGVGKT)) interacts with ATP.

The protein belongs to the ATPase alpha/beta chains family. As to quaternary structure, F-type ATPases have 2 components, CF(1) - the catalytic core - and CF(0) - the membrane proton channel. CF(1) has five subunits: alpha(3), beta(3), gamma(1), delta(1), epsilon(1). CF(0) has three main subunits: a(1), b(2) and c(9-12). The alpha and beta chains form an alternating ring which encloses part of the gamma chain. CF(1) is attached to CF(0) by a central stalk formed by the gamma and epsilon chains, while a peripheral stalk is formed by the delta and b chains.

The protein localises to the cell membrane. It carries out the reaction ATP + H2O + 4 H(+)(in) = ADP + phosphate + 5 H(+)(out). Functionally, produces ATP from ADP in the presence of a proton gradient across the membrane. The catalytic sites are hosted primarily by the beta subunits. This Desulforamulus reducens (strain ATCC BAA-1160 / DSM 100696 / MI-1) (Desulfotomaculum reducens) protein is ATP synthase subunit beta.